The sequence spans 132 residues: Small ribosomal subunit protein uS11 (132 aa).

Belongs to the universal ribosomal protein uS11 family. As to quaternary structure, part of the 30S ribosomal subunit. Interacts with proteins S7 and S18. Binds to IF-3.

Located on the platform of the 30S subunit, it bridges several disparate RNA helices of the 16S rRNA. Forms part of the Shine-Dalgarno cleft in the 70S ribosome. The polypeptide is Small ribosomal subunit protein uS11 (Bifidobacterium animalis subsp. lactis (strain AD011)).